Consider the following 385-residue polypeptide: L-arabinitol 4-dehydrogenase (385 aa).

Zn(2+) is bound by residues Cys-54, His-79, Glu-80, Cys-109, Cys-112, Cys-115, Cys-123, and Glu-164. NAD(+) contacts are provided by residues 191 to 192 (PI), Asp-212, Arg-217, Ile-292, and 316 to 318 (QYR).

This sequence belongs to the zinc-containing alcohol dehydrogenase family. In terms of assembly, homotetramer. Requires Zn(2+) as cofactor.

The catalysed reaction is L-arabinitol + NAD(+) = L-xylulose + NADH + H(+). The protein operates within carbohydrate degradation; L-arabinose degradation via L-arabinitol; D-xylulose 5-phosphate from L-arabinose (fungal route): step 2/5. In terms of biological role, catalyzes the NAD-dependent oxidation of L-arabinitol to L-xylulose in the fungal L-arabinose catabolic pathway. L-arabinose catabolism is important for using plant material as a carbon source. NADP cannot act as a cosubstrate. In Penicillium rubens (strain ATCC 28089 / DSM 1075 / NRRL 1951 / Wisconsin 54-1255) (Penicillium chrysogenum), this protein is L-arabinitol 4-dehydrogenase (lad1).